Reading from the N-terminus, the 37-residue chain is Potassium channel toxin alpha-KTx 11.1 (37 aa).

Disulfide bonds link C8–C27, C13–C33, and C17–C35.

This sequence belongs to the short scorpion toxin superfamily. Potassium channel inhibitor family. Alpha-KTx 11 subfamily. In terms of tissue distribution, expressed by the venom gland.

It is found in the secreted. Binds and inhibits voltage-sensitive potassium channels. Inhibits the vertebrate potassium channels Kv1.1/KCNA1, Kv1.2/KCNA2 and Kv1.3/KCNA3 with low affinity. Also weakly inhibits Kv7.1/KCNQ1 (10 uM of the toxin inhibits currents by 21.43%). The sequence is that of Potassium channel toxin alpha-KTx 11.1 from Parabuthus villosus (Black hairy thick-tailed scorpion).